Reading from the N-terminus, the 430-residue chain is Levansucrase Lscgamma (430 aa).

5 residues coordinate sucrose: tryptophan 60, aspartate 61, alanine 147, arginine 217, and aspartate 218. The Nucleophile role is filled by aspartate 61. Glutamate 302 acts as the Proton donor/acceptor in catalysis.

It belongs to the glycosyl hydrolase 68 family. In terms of assembly, homodimer.

The enzyme catalyses [6)-beta-D-fructofuranosyl-(2-&gt;](n) alpha-D-glucopyranoside + sucrose = [6)-beta-D-fructofuranosyl-(2-&gt;](n+1) alpha-D-glucopyranoside + D-glucose. With respect to regulation, sucrose hydrolase activity is negatively affected by salt concentration. The levan polymerization rate increases sharply in relation to sucrose concentration reaching the maximum at 100 mM sucrose, and then steadily decreases, suggesting a strong inhibition of the activity by the substrate. Functionally, catalyzes the synthesis of levan, a fructose polymer, by transferring the fructosyl moiety from sucrose to a growing acceptor molecule. Also displays sucrose hydrolase activity. Can depolymerize the levan produced once substrate is completely exhausted. The chain is Levansucrase Lscgamma from Pseudomonas syringae pv. actinidiae.